Here is a 1015-residue protein sequence, read N- to C-terminus: Translation initiation factor IF-2 (1015 aa).

Disordered stretches follow at residues 124–144 (EKEPVKEEPKPQPVAAEEKKV), 159–179 (EVTVTPATSEPKPVKEEPKPV), 196–230 (KKEEPKVVVSPEKTEKKEEKPVAEAPVTPVEKEEE), and 250–386 (IDLA…VSEE). 2 stretches are compositionally biased toward basic and acidic residues: residues 196–217 (KKEEPKVVVSPEKTEKKEEKPV) and 265–315 (SKEE…DPNG). Positions 514 to 684 (HRAPIVTVMG…LLEAEMLDLK (171 aa)) constitute a tr-type G domain. A G1 region spans residues 523-530 (GHVDHGKT). Residue 523 to 530 (GHVDHGKT) participates in GTP binding. Residues 548–552 (GITQH) form a G2 region. The G3 stretch occupies residues 570 to 573 (DTPG). Residues 570–574 (DTPGH) and 624–627 (NKID) contribute to the GTP site. The interval 624 to 627 (NKID) is G4. A G5 region spans residues 660 to 662 (SAK).

This sequence belongs to the TRAFAC class translation factor GTPase superfamily. Classic translation factor GTPase family. IF-2 subfamily.

It is found in the cytoplasm. Its function is as follows. One of the essential components for the initiation of protein synthesis. Protects formylmethionyl-tRNA from spontaneous hydrolysis and promotes its binding to the 30S ribosomal subunits. Also involved in the hydrolysis of GTP during the formation of the 70S ribosomal complex. This chain is Translation initiation factor IF-2, found in Bacteroides fragilis (strain ATCC 25285 / DSM 2151 / CCUG 4856 / JCM 11019 / LMG 10263 / NCTC 9343 / Onslow / VPI 2553 / EN-2).